The sequence spans 284 residues: MATAIRGLKLQTEDYFLTDKNAVMVAERHPQPVFPLHHHDFDELVIVWRGNGLHLWNDVPYRITRGDMFYVSAHDRHSYESVHELELDNILYIRNRLTLSADWQTLLPSGELPQSQRHWCLGSEGMDTIREKVDALTQECMKSDALSLQLSEALLLQIALLAARYRHSPDSPQLADAHQLDMLMNALRASIAAPFRFEAFCEQHHFSARSLRSRFKEQTGMSVPHYLRQLRLCKAMELLRYDLQTIGDVAALCGFEDSNYFSVVFHQAFGVSPSAYRQRFLNVE.

Residues Asp181–Arg279 enclose the HTH araC/xylS-type domain. 2 DNA-binding regions (H-T-H motif) span residues Glu198–Thr219 and Ile246–Phe269.

As to quaternary structure, binds DNA as a dimer.

The protein resides in the cytoplasm. Functionally, activates expression of the rhaSR operon in response to L-rhamnose. This Pectobacterium atrosepticum (strain SCRI 1043 / ATCC BAA-672) (Erwinia carotovora subsp. atroseptica) protein is HTH-type transcriptional activator RhaR.